The sequence spans 276 residues: Sulfur carrier protein FdhD (276 aa).

Cys120 functions as the Cysteine persulfide intermediate in the catalytic mechanism.

The protein belongs to the FdhD family.

The protein localises to the cytoplasm. Functionally, required for formate dehydrogenase (FDH) activity. Acts as a sulfur carrier protein that transfers sulfur from IscS to the molybdenum cofactor prior to its insertion into FDH. This Bordetella parapertussis (strain 12822 / ATCC BAA-587 / NCTC 13253) protein is Sulfur carrier protein FdhD.